The primary structure comprises 778 residues: Hyaluronate lyase (778 aa).

The tat-type signal signal peptide spans 1–33 (MSWNRRSFLGALGVTCLAGAGMVPIVRPRTAAA). Residues N200, H250, and Y259 contribute to the active site.

This sequence belongs to the polysaccharide lyase 8 family. Post-translationally, predicted to be exported by the Tat system. The position of the signal peptide cleavage has not been experimentally proven.

The enzyme catalyses [hyaluronan](n) = n 3-(4-deoxy-beta-D-gluc-4-enuronosyl)-N-acetyl-D-glucosamine + H2O. With respect to regulation, is salt-dependent and is active over a wide range of NaCl concentrations. Activity is slightly promoted by Ni(2+), and inhibited by most of the tested metal ions, including Li(+), K(+), Ba(2+), Mg(2+), Zn(2+), Ca(2+), Mn(2+) and Al(3+). Degrades hyaluronic acid into unsaturated disaccharides as the end products. Exhibits very low activity against various types of chondroitin sulfate variants. The sequence is that of Hyaluronate lyase from Thermasporomyces composti.